The primary structure comprises 364 residues: Anthranilate phosphoribosyltransferase (364 aa).

5-phospho-alpha-D-ribose 1-diphosphate contacts are provided by residues Gly-101, 104–105, Thr-109, 111–114, 129–137, and Gly-141; these read GD, NLST, and KHGNRAASS. Gly-101 contributes to the anthranilate binding site. Ser-113 provides a ligand contact to Mg(2+). An anthranilate-binding site is contributed by Asn-132. Arg-187 contacts anthranilate. Mg(2+) is bound by residues Asp-245 and Glu-246.

Belongs to the anthranilate phosphoribosyltransferase family. In terms of assembly, homodimer. The cofactor is Mg(2+).

It catalyses the reaction N-(5-phospho-beta-D-ribosyl)anthranilate + diphosphate = 5-phospho-alpha-D-ribose 1-diphosphate + anthranilate. The protein operates within amino-acid biosynthesis; L-tryptophan biosynthesis; L-tryptophan from chorismate: step 2/5. Functionally, catalyzes the transfer of the phosphoribosyl group of 5-phosphorylribose-1-pyrophosphate (PRPP) to anthranilate to yield N-(5'-phosphoribosyl)-anthranilate (PRA). The polypeptide is Anthranilate phosphoribosyltransferase (Mycolicibacterium vanbaalenii (strain DSM 7251 / JCM 13017 / BCRC 16820 / KCTC 9966 / NRRL B-24157 / PYR-1) (Mycobacterium vanbaalenii)).